The following is a 364-amino-acid chain: DNA replication and repair protein RecF (364 aa).

30-37 is a binding site for ATP; the sequence is GNNAQGKT.

The protein belongs to the RecF family.

The protein localises to the cytoplasm. Its function is as follows. The RecF protein is involved in DNA metabolism; it is required for DNA replication and normal SOS inducibility. RecF binds preferentially to single-stranded, linear DNA. It also seems to bind ATP. The chain is DNA replication and repair protein RecF from Clostridium botulinum (strain Loch Maree / Type A3).